The chain runs to 137 residues: Basic phospholipase A2 beta-bungarotoxin A-AL4 chain (137 aa).

The signal sequence occupies residues 1–10 (LAVCVSLLGA). Positions 11-18 (ANIPPQHL) are excised as a propeptide. 6 disulfide bridges follow: Cys45/Cys137, Cys47/Cys63, Cys62/Cys118, Cys69/Cys111, Cys79/Cys104, and Cys97/Cys109. Ca(2+) contacts are provided by Tyr46, Gly48, and Gly50. The active site involves His66. Asp67 is a Ca(2+) binding site. Asp112 is an active-site residue.

It belongs to the phospholipase A2 family. Group I subfamily. D49 sub-subfamily. Heterodimer; disulfide-linked. The A chains have phospholipase A2 activity and the B chains show homology with the basic protease inhibitors. Ca(2+) serves as cofactor. Expressed by the venom gland.

The protein resides in the secreted. The catalysed reaction is a 1,2-diacyl-sn-glycero-3-phosphocholine + H2O = a 1-acyl-sn-glycero-3-phosphocholine + a fatty acid + H(+). In terms of biological role, snake venom phospholipase A2 (PLA2) that inhibits neuromuscular transmission by blocking acetylcholine release from the nerve termini. PLA2 catalyzes the calcium-dependent hydrolysis of the 2-acyl groups in 3-sn-phosphoglycerides. This Bungarus multicinctus (Many-banded krait) protein is Basic phospholipase A2 beta-bungarotoxin A-AL4 chain.